The following is a 263-amino-acid chain: LOB domain-containing protein 41 (263 aa).

The region spanning 3-109 (MSCNGCRVLR…VEAVMKGEPV (107 aa)) is the LOB domain. Residues 162–204 (TVAIQAESEGKSDEASHDSSLSHQSEIVAAHEGESKESESNVS) form a disordered region. Basic and acidic residues-rich tracts occupy residues 169-178 (SEGKSDEASH) and 190-200 (AAHEGESKESE).

Belongs to the LOB domain-containing protein family. As to expression, expressed in young shoots, roots, stems, leaves and flowers.

In Arabidopsis thaliana (Mouse-ear cress), this protein is LOB domain-containing protein 41 (LBD41).